Reading from the N-terminus, the 285-residue chain is Golgi phosphoprotein 3-like (285 aa).

The tract at residues 1–43 (MTTLTHRTRRTEVSKSSEKKIESEEDTNQERSPDNEDPGDSKD) is disordered. A compositionally biased stretch (basic and acidic residues) spans 10–43 (RTEVSKSSEKKIESEEDTNQERSPDNEDPGDSKD). W67 and R76 together coordinate a 1,2-diacyl-sn-glycero-3-phospho-(1D-myo-inositol 4-phosphate). Phosphoserine is present on S112. Positions 157 and 160 each coordinate a 1,2-diacyl-sn-glycero-3-phospho-(1D-myo-inositol 4-phosphate). Residues 176–187 (EKQNFLLFDMTT) are beta-hairpin required for oligomerization.

Belongs to the GOLPH3/VPS74 family. Homooligomer. Does not interact MYO18; differs from GOLPH3 by its inability to interact with MYO18. May interact with ARF1. As to expression, expressed in a subset of tissues tested with higher expression in salivary gland, small intestine and skin (at protein level).

The protein localises to the golgi apparatus. It localises to the golgi stack membrane. It is found in the trans-Golgi network membrane. Its function is as follows. Phosphatidylinositol-4-phosphate-binding protein that may antagonize the action of GOLPH3 which is required for the process of vesicle budding at the Golgi and anterograde transport to the plasma membrane. This chain is Golgi phosphoprotein 3-like (Golph3l), found in Mus musculus (Mouse).